Here is a 347-residue protein sequence, read N- to C-terminus: tRNA N6-adenosine threonylcarbamoyltransferase (347 aa).

2 residues coordinate Fe cation: histidine 113 and histidine 117. Substrate-binding positions include 136-140, aspartate 170, glycine 183, aspartate 187, and asparagine 282; that span reads LVSGG. Aspartate 310 provides a ligand contact to Fe cation.

The protein belongs to the KAE1 / TsaD family. Fe(2+) is required as a cofactor.

It localises to the cytoplasm. It catalyses the reaction L-threonylcarbamoyladenylate + adenosine(37) in tRNA = N(6)-L-threonylcarbamoyladenosine(37) in tRNA + AMP + H(+). In terms of biological role, required for the formation of a threonylcarbamoyl group on adenosine at position 37 (t(6)A37) in tRNAs that read codons beginning with adenine. Is involved in the transfer of the threonylcarbamoyl moiety of threonylcarbamoyl-AMP (TC-AMP) to the N6 group of A37, together with TsaE and TsaB. TsaD likely plays a direct catalytic role in this reaction. This is tRNA N6-adenosine threonylcarbamoyltransferase from Cutibacterium acnes (strain DSM 16379 / KPA171202) (Propionibacterium acnes).